We begin with the raw amino-acid sequence, 313 residues long: MSHSVLKVPPSVIERMQSHYGPDITSLSVQGAVFQAKPQGCTITAYRSGKVLFQGKNAEKEAERWTADAETPAPKKPASKKSIPSVYQPPEGIGSMSVIGSDEVGTGDYFGPITVACVYADKAKLPLLKELGVKDSKNLKDPQIVQIARDLIKTVPYSLLVLRNEKYNEMQEKGMSQGKMKALLHNQAIGNLLKKLDGTRPEAILIDQFAEPAVYFKHLAGKTAVKERTYFSTKAEGIHLSVAAASIIARYSFLMEMDKLSKQAGITLPKGAGPLVDEAGAKLIKKHGEDALRVFTKLHFANTQKAKRIASKR.

The tract at residues 62 to 88 is disordered; that stretch reads AERWTADAETPAPKKPASKKSIPSVYQ. Positions 96–312 constitute an RNase H type-2 domain; the sequence is MSVIGSDEVG…TQKAKRIASK (217 aa). Asp-102, Glu-103, and Asp-207 together coordinate a divalent metal cation.

This sequence belongs to the RNase HII family. RnhC subfamily. It depends on Mn(2+) as a cofactor. Mg(2+) serves as cofactor.

It is found in the cytoplasm. It catalyses the reaction Endonucleolytic cleavage to 5'-phosphomonoester.. In terms of biological role, endonuclease that specifically degrades the RNA of RNA-DNA hybrids. The sequence is that of Ribonuclease HIII from Bacillus licheniformis (strain ATCC 14580 / DSM 13 / JCM 2505 / CCUG 7422 / NBRC 12200 / NCIMB 9375 / NCTC 10341 / NRRL NRS-1264 / Gibson 46).